Reading from the N-terminus, the 203-residue chain is MEFWGIEIKPGKPFKVIQKDGFMVHASQVTLGDVEKVKKDETFAVYVKIGDDENGFMIGNLSQKFPQFSIDLYLGHEFEISHNSTSSVYLIGYRTFDAFDELDEEIDSDSELDEYMEQQIAALPQNEINPEEDDESDSDEMGLDEDDDSSDEEDVEAEAPLKVAPPSKKMPNGAFEIAKGGKKNKSSGGKKRCPFPCGPSCKK.

Positions 2–5 (EFWG) are required to repress transcription. The disordered stretch occupies residues 121–203 (AALPQNEINP…PFPCGPSCKK (83 aa)). The segment covering 129–157 (NPEEDDESDSDEMGLDEDDDSSDEEDVEA) has biased composition (acidic residues). Over residues 180 to 193 (GGKKNKSSGGKKRC) the composition is skewed to basic residues.

Belongs to the histone deacetylase HD2 family. Confined to stems and flowers with young siliques.

It localises to the nucleus. Its subcellular location is the nucleolus. Its function is as follows. Probably mediates the deacetylation of lysine residues lysine residues on the N-terminal part of the core histones (H2A, H2B, H3 and H4). Histone deacetylation gives a tag for epigenetic repression and plays an important role in transcriptional regulation, cell cycle progression and developmental events. This Arabidopsis thaliana (Mouse-ear cress) protein is Histone deacetylase HDT4 (HDT4).